The chain runs to 256 residues: 5-oxoprolinase subunit A (256 aa).

It belongs to the LamB/PxpA family. As to quaternary structure, forms a complex composed of PxpA, PxpB and PxpC.

It catalyses the reaction 5-oxo-L-proline + ATP + 2 H2O = L-glutamate + ADP + phosphate + H(+). Catalyzes the cleavage of 5-oxoproline to form L-glutamate coupled to the hydrolysis of ATP to ADP and inorganic phosphate. The sequence is that of 5-oxoprolinase subunit A from Azoarcus sp. (strain BH72).